The following is a 323-amino-acid chain: HPr kinase/phosphorylase (323 aa).

Catalysis depends on residues His-146 and Lys-167. Position 161–168 (161–168 (GESGLGKS)) interacts with ATP. Ser-168 provides a ligand contact to Mg(2+). Asp-185 functions as the Proton acceptor; for phosphorylation activity. Proton donor; for dephosphorylation activity in the catalytic mechanism. The interval 209-218 (LEVRGLGLLD) is important for the catalytic mechanism of both phosphorylation and dephosphorylation. Mg(2+) is bound at residue Glu-210. Arg-250 is an active-site residue. Residues 271–276 (QVAAGR) form an important for the catalytic mechanism of dephosphorylation region.

The protein belongs to the HPrK/P family. As to quaternary structure, homohexamer. The cofactor is Mg(2+).

The enzyme catalyses [HPr protein]-L-serine + ATP = [HPr protein]-O-phospho-L-serine + ADP + H(+). It carries out the reaction [HPr protein]-O-phospho-L-serine + phosphate + H(+) = [HPr protein]-L-serine + diphosphate. Its function is as follows. Catalyzes the ATP- as well as the pyrophosphate-dependent phosphorylation of a specific serine residue in HPr, a phosphocarrier protein of the phosphoenolpyruvate-dependent sugar phosphotransferase system (PTS). HprK/P also catalyzes the pyrophosphate-producing, inorganic phosphate-dependent dephosphorylation (phosphorolysis) of seryl-phosphorylated HPr (P-Ser-HPr). The sequence is that of HPr kinase/phosphorylase from Cupriavidus pinatubonensis (strain JMP 134 / LMG 1197) (Cupriavidus necator (strain JMP 134)).